We begin with the raw amino-acid sequence, 163 residues long: 6,7-dimethyl-8-ribityllumazine synthase (163 aa).

Residues phenylalanine 27, 58–60, and 87–89 contribute to the 5-amino-6-(D-ribitylamino)uracil site; these read ALE and CVI. A (2S)-2-hydroxy-3-oxobutyl phosphate-binding site is contributed by 92-93; it reads DT. Histidine 95 functions as the Proton donor in the catalytic mechanism. Asparagine 120 provides a ligand contact to 5-amino-6-(D-ribitylamino)uracil. (2S)-2-hydroxy-3-oxobutyl phosphate is bound at residue arginine 134.

It belongs to the DMRL synthase family.

It carries out the reaction (2S)-2-hydroxy-3-oxobutyl phosphate + 5-amino-6-(D-ribitylamino)uracil = 6,7-dimethyl-8-(1-D-ribityl)lumazine + phosphate + 2 H2O + H(+). It participates in cofactor biosynthesis; riboflavin biosynthesis; riboflavin from 2-hydroxy-3-oxobutyl phosphate and 5-amino-6-(D-ribitylamino)uracil: step 1/2. Functionally, catalyzes the formation of 6,7-dimethyl-8-ribityllumazine by condensation of 5-amino-6-(D-ribitylamino)uracil with 3,4-dihydroxy-2-butanone 4-phosphate. This is the penultimate step in the biosynthesis of riboflavin. The polypeptide is 6,7-dimethyl-8-ribityllumazine synthase (Afipia carboxidovorans (strain ATCC 49405 / DSM 1227 / KCTC 32145 / OM5) (Oligotropha carboxidovorans)).